The sequence spans 1448 residues: MDNNVEYELKEVSIQEGGSNLNINTPSGMSDGDFNSGANSPDIVKSENDFDKLAESLEKESKQYFAAQDNENNAGESEEDFKLRRYFENSQRMALSNGSKPKKMSICIRNLTVVGRGADLSVIADLLTPFNWFISLFKPSTWKIEKTSTFNILNNVTCFNRDGQMLLVLGRPGAGCSTLLRLISNQRGSYISVDGDIKYGGIPAKEWERYKGEAIYTPEEDSHHPTLTVRETLDFALKCKTIHNRLPDEKKVTFREKISSLLLSMFGIVHQADTIVGNEYIRGLSGGERKRLTITEAMVSSASITCWDCSTRGLDAASALDYAKSIRIMSDTLHKTSIASFYQASDSIYNLFDNVLVLEKGRCIYFGPVGQAKQYFLDLGFDCEPRKSVPDFLTGVTNPQERIIRKGFEGRVPETSADFEQAWKASELCREMERQQTEHEKKIEVEQPHLDFIEEVRANKSKTNTKTSVYTTSFPTQVRALIVRHSQIIWGDKFSLVSRYLSVIIQSFVYGSVFYNMQTNLSGLFTRGGAIFAAILFNAFLSEGELFATFYGRRILQKQQSYAMYRPSAFHIAQVVTDIPLTTVQVFLFSIVVYFMFGLQYEAGKFFIFCFTLIGATLATTNMFRAFGNLSPSLYVSQNVMTGILIFMISYCGYSIPKNKMHPWFGWFFWANPFTYAFKALMANEFMDLNFSCETEAIPYGTDPTTGAPYDNSVRVCASAGSRPNTLEVKGSDYLMDALTFKSDDRTLNIFITYLWWVLFIIINMVAVEYLEWTSGGFTTKTYKKGKAPKLNDAEEERKQNEIVAKATSEMKDTLKMRGGVFTWENIKYTVPVGKTQKLLLDDVEGWIKPGQMTALMGSSGAGKTTLLDVLAKRKTLGTVQGKTFLNGKALEIDFERITGYVEQMDVHNPGLTVREALRFSAKLRQEPSVSLEEKYDYVEHVLEMMEMKHLGDALVGTLETGVGISVEERKRLTIGVELVAKPHILFLDEPTSGLDAQSSYNIVKFIRKLADAGMPLVCTIHQPSSVLFEHFDRILLLAKGGKTVYFGDIGERSKTLTSYFERQGVRPCTEFENPAEYILEATGAGVHGKTEINWPEVWKQSPELQEVRRELSSLEASGSSSSSNENGVPREFATSIWYQTWEVYKRMNVIYFRDPFYAYGSILQAVMTGIIVGFTFWDLKDSSSDMNQRIFFIFQALLLGILLIFVVMVQFLVQKEYFKRDYASKFYSWFPFAISIVLVEIPYTIVCGSVFFFCSFWTAGLFMEGQNGANFYFWIIFIIYLFFCVSFGGAIAAVCNHMFLAMTLVPLLIVFLFLFCGVMVPPSQIPTFWKGWVYHLNPCRYFMEGIITNVLEHQKVNCSYEDLTKFNNPTTLTCEEYFVPATGYVTNTTSDNSECGYCIFNSGEQYYKTLEWDASNKGRSIAILIAFWMFNIFLVVSFVYLTRKPSR.

The segment covering 16–28 (EGGSNLNINTPSG) has biased composition (polar residues). The disordered stretch occupies residues 16 to 41 (EGGSNLNINTPSGMSDGDFNSGANSP). An ABC transporter 1 domain is found at 136-385 (LFKPSTWKIE…FLDLGFDCEP (250 aa)). Positions 490–717 (WGDKFSLVSR…APYDNSVRVC (228 aa)) constitute an ABC transmembrane type-2 1 domain. 7 consecutive transmembrane segments (helical) span residues 494–514 (FSLVSRYLSVIIQSFVYGSVF), 530–550 (AIFAAILFNAFLSEGELFATF), 579–599 (IPLTTVQVFLFSIVVYFMFGL), 604–624 (GKFFIFCFTLIGATLATTNMF), 634–654 (LYVSQNVMTGILIFMISYCGY), 663–683 (PWFGWFFWANPFTYAFKALMA), and 748–768 (LNIFITYLWWVLFIIINMVAV). Residues 822–1066 (FTWENIKYTV…LTSYFERQGV (245 aa)) form the ABC transporter 2 domain. An ATP-binding site is contributed by 858-865 (GSSGAGKT). 6 helical membrane passes run 1157–1177 (FYAYGSILQAVMTGIIVGFTF), 1191–1211 (IFFIFQALLLGILLIFVVMVQ), 1233–1253 (FAISIVLVEIPYTIVCGSVFF), 1272–1292 (FYFWIIFIIYLFFCVSFGGAI), 1299–1319 (MFLAMTLVPLLIVFLFLFCGV), and 1422–1442 (IAILIAFWMFNIFLVVSFVYL). The ABC transmembrane type-2 2 domain maps to 1157–1389 (FYAYGSILQA…VPATGYVTNT (233 aa)).

The protein belongs to the ABC transporter superfamily. ABCG family. PDR (TC 3.A.1.205) subfamily.

It is found in the membrane. This Dictyostelium discoideum (Social amoeba) protein is ABC transporter G family member 9 (abcG9).